A 236-amino-acid polypeptide reads, in one-letter code: 7-cyano-7-deazaguanine synthase (236 aa).

Position 7–17 (7–17 (CSGGLDSVSLA)) interacts with ATP. Residues Cys-185, Cys-193, Cys-196, and Cys-199 each contribute to the Zn(2+) site.

Belongs to the QueC family. The cofactor is Zn(2+).

The catalysed reaction is 7-carboxy-7-deazaguanine + NH4(+) + ATP = 7-cyano-7-deazaguanine + ADP + phosphate + H2O + H(+). It functions in the pathway purine metabolism; 7-cyano-7-deazaguanine biosynthesis. In terms of biological role, catalyzes the ATP-dependent conversion of 7-carboxy-7-deazaguanine (CDG) to 7-cyano-7-deazaguanine (preQ(0)). This chain is 7-cyano-7-deazaguanine synthase, found in Rhizobium etli (strain ATCC 51251 / DSM 11541 / JCM 21823 / NBRC 15573 / CFN 42).